The sequence spans 254 residues: Attacin-A (254 aa).

Positions 1-18 (MFTYKLILGLVLVVSASA) are cleaved as a signal peptide. A propeptide spanning residues 19-62 (RYLVFEDLEGESYLVPNQAEDEQVLEGEPFYENAVQLASPRVRR) is cleaved from the precursor.

This sequence belongs to the attacin/sarcotoxin-2 family.

It localises to the secreted. Hemolymph antibacterial protein. The polypeptide is Attacin-A (Trichoplusia ni (Cabbage looper)).